A 628-amino-acid polypeptide reads, in one-letter code: tRNA uridine 5-carboxymethylaminomethyl modification enzyme MnmG (628 aa).

Glycine 13–glycine 18 lines the FAD pocket. Glycine 281 to phenylalanine 295 lines the NAD(+) pocket.

This sequence belongs to the MnmG family. As to quaternary structure, homodimer. Heterotetramer of two MnmE and two MnmG subunits. Requires FAD as cofactor.

It localises to the cytoplasm. Functionally, NAD-binding protein involved in the addition of a carboxymethylaminomethyl (cmnm) group at the wobble position (U34) of certain tRNAs, forming tRNA-cmnm(5)s(2)U34. In Treponema denticola (strain ATCC 35405 / DSM 14222 / CIP 103919 / JCM 8153 / KCTC 15104), this protein is tRNA uridine 5-carboxymethylaminomethyl modification enzyme MnmG.